Here is a 338-residue protein sequence, read N- to C-terminus: DNA-directed RNA polymerase subunit alpha (338 aa).

An alpha N-terminal domain (alpha-NTD) region spans residues 1–226 (MLIAQRPTLT…ELFGLTRELN (226 aa)). Positions 243–338 (YAESLGTPVE…DDDYAETEQY (96 aa)) are alpha C-terminal domain (alpha-CTD). Residues 319-338 (AAAEAYDEANDDDYAETEQY) are disordered. The segment covering 323–338 (AYDEANDDDYAETEQY) has biased composition (acidic residues).

This sequence belongs to the RNA polymerase alpha chain family. Homodimer. The RNAP catalytic core consists of 2 alpha, 1 beta, 1 beta' and 1 omega subunit. When a sigma factor is associated with the core the holoenzyme is formed, which can initiate transcription.

It catalyses the reaction RNA(n) + a ribonucleoside 5'-triphosphate = RNA(n+1) + diphosphate. Its function is as follows. DNA-dependent RNA polymerase catalyzes the transcription of DNA into RNA using the four ribonucleoside triphosphates as substrates. This is DNA-directed RNA polymerase subunit alpha from Cutibacterium acnes (strain DSM 16379 / KPA171202) (Propionibacterium acnes).